The primary structure comprises 229 residues: Putative 3-methyladenine DNA glycosylase (229 aa).

Belongs to the DNA glycosylase MPG family.

The sequence is that of Putative 3-methyladenine DNA glycosylase from Enterococcus faecalis (strain ATCC 700802 / V583).